The chain runs to 350 residues: Phenylalanine--tRNA ligase alpha subunit (350 aa).

Glu260 is a Mg(2+) binding site.

The protein belongs to the class-II aminoacyl-tRNA synthetase family. Phe-tRNA synthetase alpha subunit type 1 subfamily. In terms of assembly, tetramer of two alpha and two beta subunits. Mg(2+) serves as cofactor.

Its subcellular location is the cytoplasm. The enzyme catalyses tRNA(Phe) + L-phenylalanine + ATP = L-phenylalanyl-tRNA(Phe) + AMP + diphosphate + H(+). This is Phenylalanine--tRNA ligase alpha subunit from Mesoplasma florum (strain ATCC 33453 / NBRC 100688 / NCTC 11704 / L1) (Acholeplasma florum).